The primary structure comprises 85 residues: Putative membrane protein insertion efficiency factor (85 aa).

This sequence belongs to the UPF0161 family.

The protein localises to the cell membrane. Could be involved in insertion of integral membrane proteins into the membrane. The sequence is that of Putative membrane protein insertion efficiency factor from Buchnera aphidicola subsp. Baizongia pistaciae (strain Bp).